A 107-amino-acid chain; its full sequence is Nucleoid-associated protein BLi00029/BL02358 (107 aa).

Residues 1–27 (MRGGMGNMQKMMKQMQKMQKDMQKAQE) form a disordered region. Residues 8–17 (MQKMMKQMQK) show a composition bias toward low complexity. Basic and acidic residues predominate over residues 18–27 (MQKDMQKAQE).

Belongs to the YbaB/EbfC family. In terms of assembly, homodimer.

The protein localises to the cytoplasm. Its subcellular location is the nucleoid. Functionally, binds to DNA and alters its conformation. May be involved in regulation of gene expression, nucleoid organization and DNA protection. This chain is Nucleoid-associated protein BLi00029/BL02358, found in Bacillus licheniformis (strain ATCC 14580 / DSM 13 / JCM 2505 / CCUG 7422 / NBRC 12200 / NCIMB 9375 / NCTC 10341 / NRRL NRS-1264 / Gibson 46).